The primary structure comprises 191 residues: Fe/S biogenesis protein NfuA (191 aa).

The [4Fe-4S] cluster site is built by Cys149 and Cys152.

It belongs to the NfuA family. In terms of assembly, homodimer. Requires [4Fe-4S] cluster as cofactor.

Functionally, involved in iron-sulfur cluster biogenesis. Binds a 4Fe-4S cluster, can transfer this cluster to apoproteins, and thereby intervenes in the maturation of Fe/S proteins. Could also act as a scaffold/chaperone for damaged Fe/S proteins. The chain is Fe/S biogenesis protein NfuA from Yersinia enterocolitica serotype O:8 / biotype 1B (strain NCTC 13174 / 8081).